A 418-amino-acid polypeptide reads, in one-letter code: Serine hydroxymethyltransferase (418 aa).

(6S)-5,6,7,8-tetrahydrofolate-binding positions include Leu121 and 125-127; that span reads GHL. Lys230 is modified (N6-(pyridoxal phosphate)lysine). 355 to 357 contributes to the (6S)-5,6,7,8-tetrahydrofolate binding site; it reads SPF.

This sequence belongs to the SHMT family. Homodimer. Pyridoxal 5'-phosphate is required as a cofactor.

The protein localises to the cytoplasm. The enzyme catalyses (6R)-5,10-methylene-5,6,7,8-tetrahydrofolate + glycine + H2O = (6S)-5,6,7,8-tetrahydrofolate + L-serine. It functions in the pathway one-carbon metabolism; tetrahydrofolate interconversion. It participates in amino-acid biosynthesis; glycine biosynthesis; glycine from L-serine: step 1/1. Functionally, catalyzes the reversible interconversion of serine and glycine with tetrahydrofolate (THF) serving as the one-carbon carrier. This reaction serves as the major source of one-carbon groups required for the biosynthesis of purines, thymidylate, methionine, and other important biomolecules. Also exhibits THF-independent aldolase activity toward beta-hydroxyamino acids, producing glycine and aldehydes, via a retro-aldol mechanism. The protein is Serine hydroxymethyltransferase of Streptococcus pyogenes serotype M49 (strain NZ131).